Consider the following 917-residue polypeptide: Alanine--tRNA ligase (917 aa).

Zn(2+) is bound by residues His615, His619, Cys719, and His723.

This sequence belongs to the class-II aminoacyl-tRNA synthetase family. Zn(2+) is required as a cofactor.

It localises to the cytoplasm. It catalyses the reaction tRNA(Ala) + L-alanine + ATP = L-alanyl-tRNA(Ala) + AMP + diphosphate. Its function is as follows. Catalyzes the attachment of alanine to tRNA(Ala) in a two-step reaction: alanine is first activated by ATP to form Ala-AMP and then transferred to the acceptor end of tRNA(Ala). Also edits incorrectly charged Ser-tRNA(Ala) and Gly-tRNA(Ala) via its editing domain. The sequence is that of Alanine--tRNA ligase from Thermococcus kodakarensis (strain ATCC BAA-918 / JCM 12380 / KOD1) (Pyrococcus kodakaraensis (strain KOD1)).